Reading from the N-terminus, the 608-residue chain is DNA mismatch repair protein MutL (608 aa).

This sequence belongs to the DNA mismatch repair MutL/HexB family.

Its function is as follows. This protein is involved in the repair of mismatches in DNA. It is required for dam-dependent methyl-directed DNA mismatch repair. May act as a 'molecular matchmaker', a protein that promotes the formation of a stable complex between two or more DNA-binding proteins in an ATP-dependent manner without itself being part of a final effector complex. The polypeptide is DNA mismatch repair protein MutL (Anoxybacillus flavithermus (strain DSM 21510 / WK1)).